The following is a 470-amino-acid chain: Argininosuccinate lyase (470 aa).

Belongs to the lyase 1 family. Argininosuccinate lyase subfamily.

Its subcellular location is the cytoplasm. It catalyses the reaction 2-(N(omega)-L-arginino)succinate = fumarate + L-arginine. The protein operates within amino-acid biosynthesis; L-arginine biosynthesis; L-arginine from L-ornithine and carbamoyl phosphate: step 3/3. This chain is Argininosuccinate lyase, found in Mycolicibacterium vanbaalenii (strain DSM 7251 / JCM 13017 / BCRC 16820 / KCTC 9966 / NRRL B-24157 / PYR-1) (Mycobacterium vanbaalenii).